A 524-amino-acid polypeptide reads, in one-letter code: Methylmalonyl-CoA carboxyltransferase 12S subunit (524 aa).

Positions 13-268 constitute a CoA carboxyltransferase N-terminal domain; the sequence is MEGRVEQLAE…NNTEEASFVN (256 aa). A carboxyltransferase region spans residues 13-506; it reads MEGRVEQLAE…RRKIASALEM (494 aa). The CoA carboxyltransferase C-terminal domain occupies 274–506; that stretch reads SPNTELRDIV…RRKIASALEM (233 aa).

As to quaternary structure, homohexamer. Transcarboxylase is composed of three subunits: 1.3S, 5S, and 12S. The core of the enzyme is composed of six 12S subunits. On each side of the core there are three pairs of 5S subunits. Each 5S dimer is attached to the core by two 1.3S subunits. Thus the total number of chains is 30 (6 + 12 + 12).

The enzyme catalyses (S)-methylmalonyl-CoA + pyruvate = propanoyl-CoA + oxaloacetate. The 12S subunit specifically catalyzes the transfer of the carboxyl group of methylmalonyl CoA to the biotin of the 1.3S subunit forming propanoyl-CoA and carboxylated 1.3S-biotin. This chain is Methylmalonyl-CoA carboxyltransferase 12S subunit, found in Propionibacterium freudenreichii subsp. shermanii.